The chain runs to 79 residues: Small ribosomal subunit protein bS16c (79 aa).

Belongs to the bacterial ribosomal protein bS16 family.

It localises to the plastid. Its subcellular location is the chloroplast. This is Small ribosomal subunit protein bS16c from Thalassiosira pseudonana (Marine diatom).